The following is a 379-amino-acid chain: UDP-4-amino-4-deoxy-L-arabinose--oxoglutarate aminotransferase (379 aa).

Lys-182 bears the N6-(pyridoxal phosphate)lysine mark.

It belongs to the DegT/DnrJ/EryC1 family. ArnB subfamily. In terms of assembly, homodimer. It depends on pyridoxal 5'-phosphate as a cofactor.

The enzyme catalyses UDP-4-amino-4-deoxy-beta-L-arabinose + 2-oxoglutarate = UDP-beta-L-threo-pentopyranos-4-ulose + L-glutamate. It participates in nucleotide-sugar biosynthesis; UDP-4-deoxy-4-formamido-beta-L-arabinose biosynthesis; UDP-4-deoxy-4-formamido-beta-L-arabinose from UDP-alpha-D-glucuronate: step 2/3. The protein operates within bacterial outer membrane biogenesis; lipopolysaccharide biosynthesis. Catalyzes the conversion of UDP-4-keto-arabinose (UDP-Ara4O) to UDP-4-amino-4-deoxy-L-arabinose (UDP-L-Ara4N). The modified arabinose is attached to lipid A and is required for resistance to polymyxin and cationic antimicrobial peptides. In Escherichia coli O7:K1 (strain IAI39 / ExPEC), this protein is UDP-4-amino-4-deoxy-L-arabinose--oxoglutarate aminotransferase.